Reading from the N-terminus, the 357-residue chain is Metacaspase-3 (357 aa).

His168 is a catalytic residue. 3 residues coordinate Ca(2+): Asp183, Asp199, and Asp200. Cys223 is an active-site residue. A Ca(2+)-binding site is contributed by Asp230.

Belongs to the peptidase C14B family.

It localises to the recycling endosome. Activated by Ca(2+). Cysteine protease that cleaves specifically after arginine or lysine residues. In the bloodstream form, may cleave inactive metacaspase-4 MCA4 prior to MCA4 secretion. The polypeptide is Metacaspase-3 (Trypanosoma brucei brucei).